Here is a 647-residue protein sequence, read N- to C-terminus: Cartilage acidic protein 1 (647 aa).

The N-terminal stretch at 1–30 (MMLPADFFVPVSKMMLLALLLSIIICCGGA) is a signal peptide. The stretch at 48-90 (DYDSNPTQLNYGVAITDVDNDGDFEVVVAGYNGPNLVLKYIKE) is one FG-GAP 1; atypical repeat. One copy of the FG-GAP 2; atypical repeat lies at 107-149 (YALRDRQGNAIGVAACDIDGDGREEIYFLNTNNAFSGIATYSD). The FG-GAP 3; atypical repeat unit spans residues 285–335 (TGVDDVYQHGRGVALADFNRDGKVDIVYGNWNGPHRLFLQMNTNGKVRFRD). The FG-GAP 4; atypical repeat unit spans residues 397 to 439 (GDASEPDGRGTGGAVTDFDGDGMLDLILSHGESMAQPLSVFKG). The EGF-like domain maps to 561 to 607 (DTDECIQFPFVCPREKPVCINTYGGYKCRPNRRCSRGFEPNEDGTAC). Disulfide bonds link Cys-565–Cys-579, Cys-572–Cys-588, and Cys-594–Cys-607.

Its subcellular location is the secreted. It localises to the extracellular space. It is found in the extracellular matrix. This is Cartilage acidic protein 1 (crtac1) from Xenopus tropicalis (Western clawed frog).